The following is a 536-amino-acid chain: Zinc finger CCCH domain-containing protein 18 (536 aa).

Residues 156–183 (EFPVKICHYFNKGFCKHGNNCRYFHGQI) form a C3H1-type zinc finger. In terms of domain architecture, HTH OST-type spans 211–294 (SLEKLEGEII…HGQHSVILAE (84 aa)). Residues 317–392 (RQIYLTFPAE…ARVLVKPYRE (76 aa)) enclose the RRM domain.

Its function is as follows. Possesses ribonuclease activity in vitro. This Arabidopsis thaliana (Mouse-ear cress) protein is Zinc finger CCCH domain-containing protein 18.